The sequence spans 317 residues: Acetyl-coenzyme A carboxylase carboxyl transferase subunit alpha (317 aa).

Residues 43-293 (RVRESMADIY…GDVISNALGE (251 aa)) form the CoA carboxyltransferase C-terminal domain.

The protein belongs to the AccA family. Acetyl-CoA carboxylase is a heterohexamer composed of biotin carboxyl carrier protein (AccB), biotin carboxylase (AccC) and two subunits each of ACCase subunit alpha (AccA) and ACCase subunit beta (AccD).

The protein localises to the cytoplasm. It carries out the reaction N(6)-carboxybiotinyl-L-lysyl-[protein] + acetyl-CoA = N(6)-biotinyl-L-lysyl-[protein] + malonyl-CoA. Its pathway is lipid metabolism; malonyl-CoA biosynthesis; malonyl-CoA from acetyl-CoA: step 1/1. Functionally, component of the acetyl coenzyme A carboxylase (ACC) complex. First, biotin carboxylase catalyzes the carboxylation of biotin on its carrier protein (BCCP) and then the CO(2) group is transferred by the carboxyltransferase to acetyl-CoA to form malonyl-CoA. The protein is Acetyl-coenzyme A carboxylase carboxyl transferase subunit alpha of Rhizobium rhizogenes (strain K84 / ATCC BAA-868) (Agrobacterium radiobacter).